Consider the following 824-residue polypeptide: MEEKYNPSAVEEKWQGYWAEHESFKATEDPTRKKYYLLEMFPYPSGKIHMGHVRNYSIGDVIARFKRMQGYNVLHPMGWDAFGMPAENAAIQHKSHPAKWTYENIAYMRGQLKTLGLSYDWDRELATCDLDYYKWEQRIFLEMYKKGLAYKKSSAVNWCPKCETVLANEQVEDGCCWRCDSPVRQKELEQWSFRITNYAQELLDDTYKLTGWPERVLTMQRNWIGRSTGCEIDFPLENGLGKIKVFTTRQDTLFGATFMSLAAEHPMALDLAGDAQRAQVEAFIDKVKKTDRIKRGAEDLEKEGVFTGSYCVNPVTNTKMPIYLANFVLMDYGTGAVMAVPTHDQRDFEFAKKYNLPLKVVIQPEGETLDPAAMTEAYTAEGIMANSGRFDGMGNGDAKEAIADFLEKEGIGKKTVNFRLRDWGISRQRYWGNPIPVINCDLCGVVAVPEADLPVVLPMDAEFTGEGGNPLARVDSFTTCTCPQCGEAARRETDTMDTFVQSSWYFLRYCSPKFSAGPLDREKVEAWMPVDQYIGGIEHAVLHLLYARFFTKVLRDLGYCNVDEPFSNLLTQGMVIKDGAKMSKSKGNVVDPNALIERYGADTARLFSLFAAPPEKDLDWSDQGVDGSYRFLNRVWRLVYDVLPVIGEAGAVNPDSLGAEAKKLRRAVHKTIKKVSEDVEERFHFNTAIAAVMELVNAIQAFAAKDAPENVAVVREAVESVVRLLAPFVPHFAEELWSQLGHDTVLEAAGWPGYDAAAVVDEEVTVVIQVNGKLRSKLTVAPDAKEEEVRAQALADDKIKPYLEGKDVKKVVYVPGKLVSIVVA.

The short motif at P42–H52 is the 'HIGH' region element. The 'KMSKS' region motif lies at K581–S585. K584 contacts ATP.

Belongs to the class-I aminoacyl-tRNA synthetase family.

The protein localises to the cytoplasm. The enzyme catalyses tRNA(Leu) + L-leucine + ATP = L-leucyl-tRNA(Leu) + AMP + diphosphate. This Geobacter sp. (strain M21) protein is Leucine--tRNA ligase.